Here is an 83-residue protein sequence, read N- to C-terminus: Small ribosomal subunit protein uS17 (83 aa).

It belongs to the universal ribosomal protein uS17 family. Part of the 30S ribosomal subunit.

One of the primary rRNA binding proteins, it binds specifically to the 5'-end of 16S ribosomal RNA. The polypeptide is Small ribosomal subunit protein uS17 (Acaryochloris marina (strain MBIC 11017)).